The primary structure comprises 256 residues: MCLLIDAGNSRIKWALADTARHFVTSGAFEHASDAPDWSTLPAPRGAWISNVAGDAAAARIDALIEARWPALPRTVVRASAAQCGVTNGYAEPARLGSDRWAGLIGAHAAFADEHLLIATFGTATTLEALRADGHFAGGLIAPGWALMMRSLGMHTAQLPTVSIDAATNLLDELAENDAHAPFAIDTPHALSAGCLQAQAGLIERAWRDLEKAWQAPVRLVLSGGAADAIVRALTVPHTRHDTLVLTGLALIAHSA.

6–13 is a binding site for ATP; it reads DAGNSRIK. Substrate-binding positions include Y90 and 97-100; that span reads GSDR. Catalysis depends on D99, which acts as the Proton acceptor. T123 contributes to the ATP binding site. Substrate is bound at residue T187.

This sequence belongs to the type III pantothenate kinase family. Homodimer. NH4(+) is required as a cofactor. It depends on K(+) as a cofactor.

The protein resides in the cytoplasm. The catalysed reaction is (R)-pantothenate + ATP = (R)-4'-phosphopantothenate + ADP + H(+). Its pathway is cofactor biosynthesis; coenzyme A biosynthesis; CoA from (R)-pantothenate: step 1/5. Functionally, catalyzes the phosphorylation of pantothenate (Pan), the first step in CoA biosynthesis. This is Type III pantothenate kinase from Burkholderia mallei (strain NCTC 10247).